The sequence spans 155 residues: Small ribosomal subunit protein uS7cz/uS7cy (155 aa).

Belongs to the universal ribosomal protein uS7 family. Part of the 30S ribosomal subunit.

The protein resides in the plastid. The protein localises to the chloroplast. Functionally, one of the primary rRNA binding proteins, it binds directly to 16S rRNA where it nucleates assembly of the head domain of the 30S subunit. The protein is Small ribosomal subunit protein uS7cz/uS7cy (rps7-A) of Lotus japonicus (Lotus corniculatus var. japonicus).